The sequence spans 85 residues: Electron transfer flavoprotein regulatory factor 1 homolog (85 aa).

It belongs to the complex I LYR family. In terms of tissue distribution, highly expressed in the larval fat body.

The protein localises to the mitochondrion. Acts as a regulator of the electron transfer flavoprotein by promoting the removal of flavin from the ETF holoenzyme. May act with the ETF complex to coordinate lipid homeostasis in the fat body in response to stage-specific demands. This chain is Electron transfer flavoprotein regulatory factor 1 homolog, found in Drosophila melanogaster (Fruit fly).